The chain runs to 500 residues: Raftlin-2 (500 aa).

A lipid anchor (N-myristoyl glycine) is attached at G2. C3 carries the S-palmitoyl cysteine lipid modification. Residues 203–236 (GHLSESGVEEEPQHESGQHQTERNSSPSYANPKR) form a disordered region. Basic and acidic residues predominate over residues 213–224 (EPQHESGQHQTE). A Phosphoserine modification is found at S404. Residues 406-500 (AQTPERKGSR…EEGVTQVTCM (95 aa)) are disordered. A Phosphothreonine modification is found at T408. Basic and acidic residues predominate over residues 409-424 (PERKGSRLLKGEDRNK). Polar residues predominate over residues 426-438 (SSRSLGLDTNASQ). The residue at position 429 (S429) is a Phosphoserine. Residues 467-478 (SDSFSGFSSSDS) show a composition bias toward low complexity.

Belongs to the raftlin family. As to expression, expressed in B-cells, heart, brain, spleen, large intestine and lung. Expressed in dendritic cells and macrophages.

The protein resides in the cell membrane. Its function is as follows. Upon bacterial lipopolysaccharide stimulation, mediates clathrin-dependent internalization of TLR4 in dendritic cells, resulting in activation of TICAM1-mediated signaling and subsequent IFNB1 production. May regulate B-cell antigen receptor-mediated signaling. The protein is Raftlin-2 (Rftn2) of Mus musculus (Mouse).